A 121-amino-acid polypeptide reads, in one-letter code: Protein TusC (121 aa).

The protein belongs to the DsrF/TusC family. Heterohexamer, formed by a dimer of trimers. The hexameric TusBCD complex contains 2 copies each of TusB, TusC and TusD. The TusBCD complex interacts with TusE.

The protein localises to the cytoplasm. Its function is as follows. Part of a sulfur-relay system required for 2-thiolation of 5-methylaminomethyl-2-thiouridine (mnm(5)s(2)U) at tRNA wobble positions. The sequence is that of Protein TusC from Yersinia pestis bv. Antiqua (strain Antiqua).